A 157-amino-acid polypeptide reads, in one-letter code: 3-dehydroquinate dehydratase (157 aa).

The active-site Proton acceptor is the Tyr-22. Asn-73, His-79, and Asp-86 together coordinate substrate. His-99 acts as the Proton donor in catalysis. Residues 100–101 and Arg-110 contribute to the substrate site; that span reads LS.

Belongs to the type-II 3-dehydroquinase family. Homododecamer.

It carries out the reaction 3-dehydroquinate = 3-dehydroshikimate + H2O. It participates in metabolic intermediate biosynthesis; chorismate biosynthesis; chorismate from D-erythrose 4-phosphate and phosphoenolpyruvate: step 3/7. Its function is as follows. Catalyzes a trans-dehydration via an enolate intermediate. The protein is 3-dehydroquinate dehydratase of Roseiflexus castenholzii (strain DSM 13941 / HLO8).